The sequence spans 327 residues: Transcription factor bHLH48 (327 aa).

Residues 137-179 (EPAETDSMVENQNQSYSSGKRKEREKKVKSSTKKNKSSVESDK) are disordered. One can recognise a bHLH domain in the interval 191 to 241 (QATDNHSLAERARREKINARMKLLQELVPGCDKIQGTALVLDEIINHVQTL).

As to quaternary structure, homodimer. In terms of tissue distribution, expressed in leaves, stems, and flowers.

It is found in the nucleus. The protein is Transcription factor bHLH48 (BHLH48) of Arabidopsis thaliana (Mouse-ear cress).